Consider the following 217-residue polypeptide: MGLELGFRELGEVPYEPTWHAMQRFVAERDKSVMDEAWLLQHPAVFTQGQAGKAEHVLFPGDIPVIQVDRGGQVTYHGPGQLVTYLLLDVRRLGLGVRELVSRIEQSLIGLLASYDVQAVAKPDAPGVYVDGAKIASLGLRIRNGCSFHGLALNLDMDLRPFQRINPCGYAGMPMTQLRDLVGPVDFAEVCTRLRAELVSRLGYAEQKTLTGGIELT.

One can recognise a BPL/LPL catalytic domain in the interval 31-206 (KSVMDEAWLL…ELVSRLGYAE (176 aa)). Substrate-binding positions include 70 to 77 (RGGQVTYH), 137 to 139 (SLG), and 150 to 152 (GLA). Cys-168 serves as the catalytic Acyl-thioester intermediate.

The protein belongs to the LipB family.

Its subcellular location is the cytoplasm. It catalyses the reaction octanoyl-[ACP] + L-lysyl-[protein] = N(6)-octanoyl-L-lysyl-[protein] + holo-[ACP] + H(+). It functions in the pathway protein modification; protein lipoylation via endogenous pathway; protein N(6)-(lipoyl)lysine from octanoyl-[acyl-carrier-protein]: step 1/2. Catalyzes the transfer of endogenously produced octanoic acid from octanoyl-acyl-carrier-protein onto the lipoyl domains of lipoate-dependent enzymes. Lipoyl-ACP can also act as a substrate although octanoyl-ACP is likely to be the physiological substrate. The polypeptide is Octanoyltransferase (Pseudomonas aeruginosa (strain UCBPP-PA14)).